The following is a 261-amino-acid chain: Putative hydro-lyase VSAL_I1435 (261 aa).

Belongs to the D-glutamate cyclase family.

The protein is Putative hydro-lyase VSAL_I1435 of Aliivibrio salmonicida (strain LFI1238) (Vibrio salmonicida (strain LFI1238)).